We begin with the raw amino-acid sequence, 445 residues long: MGKLIELLLHPSELSAAIHYKLWRQPLHPRDLSKESTELRRCYELLDVCSRSFAAVIRELHPEVRDAVMLFYLILRALDTIEDDMTLSRDIKIPILRDFTKCMKTPGWKFTDSDPNERDRVVLQEFPVVMTEFNKLKPKYQEVIYDITDRMGNGMADYVIDDDFNNNGVDTIAAYDLYCHHVAGIVGEGLTRITILAGFGTDVLHENPRLQESMGLFLQKVNIIRDYREDIDVNRAFWPREIWHKYAEEMRDFKDPKYSKKALHCTSDLVANALGHATDCLDYLDNVTDPSTFTFCAIPQVMAIATLDLVYRNPDVFQKNVKLRKGTTVSLILEASNVSGVCDIFTRYARKVYKKSDPNDPNYFRVSVLCGKIEQHAALIKRQRGPPAKTIAQLEGERKEMALSLIVCLAVIFSMSGLMAYIAYVSGFRWSPREIFDSKMFPLRD.

Transmembrane regions (helical) follow at residues 291–311 (STFT…DLVY) and 405–425 (LIVC…IAYV).

The protein belongs to the phytoene/squalene synthase family. Requires Mg(2+) as cofactor.

It is found in the endoplasmic reticulum membrane. It carries out the reaction 2 (2E,6E)-farnesyl diphosphate + NADPH + H(+) = squalene + 2 diphosphate + NADP(+). It catalyses the reaction 2 (2E,6E)-farnesyl diphosphate + NADH + H(+) = squalene + 2 diphosphate + NAD(+). It participates in terpene metabolism; lanosterol biosynthesis; lanosterol from farnesyl diphosphate: step 1/3. Catalyzes the condensation of 2 two farnesyl pyrophosphate moieties to form squalene. It is the first committed enzyme of the sterol biosynthesis pathway. Required for the biosynthesis of ergosterol. The protein is Squalene synthase (SQS1) of Yarrowia lipolytica (strain CLIB 122 / E 150) (Yeast).